The following is a 133-amino-acid chain: Small ribosomal subunit protein uS9 (133 aa).

A disordered region spans residues 111–133; sequence PRRSESKKFGGPGARARKQKSYR.

This sequence belongs to the universal ribosomal protein uS9 family.

In Methanosphaera stadtmanae (strain ATCC 43021 / DSM 3091 / JCM 11832 / MCB-3), this protein is Small ribosomal subunit protein uS9.